Reading from the N-terminus, the 475-residue chain is Ribonuclease Y (475 aa).

The tract at residues glutamate 34–arginine 73 is disordered. The KH domain maps to threonine 165–leucine 228. Residues valine 291–alanine 384 enclose the HD domain.

It belongs to the RNase Y family.

Its function is as follows. Endoribonuclease that initiates mRNA decay. The sequence is that of Ribonuclease Y from Alkaliphilus metalliredigens (strain QYMF).